The sequence spans 452 residues: tRNA modification GTPase MnmE (452 aa).

The (6S)-5-formyl-5,6,7,8-tetrahydrofolate site is built by arginine 25, glutamate 81, and lysine 120. The region spanning 216-375 (GITVVIAGEP…LKNHLKNTAG (160 aa)) is the TrmE-type G domain. Asparagine 226 contributes to the K(+) binding site. Residues 226-231 (NVGKSS), 245-251 (TDIAGTT), and 270-273 (DTAG) each bind GTP. Residue serine 230 coordinates Mg(2+). Threonine 245, isoleucine 247, and threonine 250 together coordinate K(+). Threonine 251 lines the Mg(2+) pocket. Residue lysine 452 coordinates (6S)-5-formyl-5,6,7,8-tetrahydrofolate.

The protein belongs to the TRAFAC class TrmE-Era-EngA-EngB-Septin-like GTPase superfamily. TrmE GTPase family. As to quaternary structure, homodimer. Heterotetramer of two MnmE and two MnmG subunits. K(+) is required as a cofactor.

It is found in the cytoplasm. In terms of biological role, exhibits a very high intrinsic GTPase hydrolysis rate. Involved in the addition of a carboxymethylaminomethyl (cmnm) group at the wobble position (U34) of certain tRNAs, forming tRNA-cmnm(5)s(2)U34. In Coxiella burnetii (strain Dugway 5J108-111), this protein is tRNA modification GTPase MnmE.